Reading from the N-terminus, the 350-residue chain is Ion-translocating oxidoreductase complex subunit D (350 aa).

Transmembrane regions (helical) follow at residues 36 to 56 (CYFF…IAVA), 89 to 109 (IPAL…ILVV), and 124 to 144 (AMAA…TWVA). An FMN phosphoryl threonine modification is found at Thr-185. Transmembrane regions (helical) follow at residues 212-232 (GFGI…LVML), 239-259 (WQIS…GYLL), 265-285 (MGPL…FIAT), 298-318 (LIFG…CGYP), and 319-339 (DAFA…DYYV).

The protein belongs to the NqrB/RnfD family. The complex is composed of six subunits: RnfA, RnfB, RnfC, RnfD, RnfE and RnfG. Requires FMN as cofactor.

The protein localises to the cell inner membrane. In terms of biological role, part of a membrane-bound complex that couples electron transfer with translocation of ions across the membrane. The chain is Ion-translocating oxidoreductase complex subunit D from Shewanella loihica (strain ATCC BAA-1088 / PV-4).